Reading from the N-terminus, the 92-residue chain is MEIKSDNPDHGFQFPGQFELSAMGPANRGLEHELPRLLLAAGIDVVNERISWKHSSNGKYVSVRIVFKAESREQYDLAHQALRDHPEVKWTL.

This sequence belongs to the UPF0250 family.

The sequence is that of UPF0250 protein Smlt4048 from Stenotrophomonas maltophilia (strain K279a).